Consider the following 274-residue polypeptide: Actin-binding protein Smlt3054 (274 aa).

ANK repeat units follow at residues 192–221 (SGNT…DVAA) and 225–254 (HGWA…NPEQ). The segment at 251-274 (NPEQPGWRGRTPTRMHRHEQTQAL) is disordered.

In terms of assembly, exists as a dimer as well as a higher order oligomer.

Its subcellular location is the secreted. The protein localises to the periplasm. Its function is as follows. Directly binds F-actin, which results in thickened and distorted F-actin fibers, and affects cellular F-actin localization. Thus, may be a host effector whose function is to disrupt host actin cytoskeletal structure, which may enhance invasion. The polypeptide is Actin-binding protein Smlt3054 (Stenotrophomonas maltophilia (strain K279a)).